The chain runs to 475 residues: Ribulose bisphosphate carboxylase large chain (475 aa).

The propeptide occupies 1-2 (MS). Position 3 is an N-acetylproline (Pro3). Position 14 is an N6,N6,N6-trimethyllysine (Lys14). Positions 123 and 173 each coordinate substrate. Lys175 acts as the Proton acceptor in catalysis. Position 177 (Lys177) interacts with substrate. Lys201, Asp203, and Glu204 together coordinate Mg(2+). The residue at position 201 (Lys201) is an N6-carboxylysine. His294 acts as the Proton acceptor in catalysis. Substrate-binding residues include Arg295, His327, and Ser379.

It belongs to the RuBisCO large chain family. Type I subfamily. In terms of assembly, heterohexadecamer of 8 large chains and 8 small chains; disulfide-linked. The disulfide link is formed within the large subunit homodimers. Requires Mg(2+) as cofactor. In terms of processing, the disulfide bond which can form in the large chain dimeric partners within the hexadecamer appears to be associated with oxidative stress and protein turnover.

It localises to the plastid. The protein resides in the chloroplast. The enzyme catalyses 2 (2R)-3-phosphoglycerate + 2 H(+) = D-ribulose 1,5-bisphosphate + CO2 + H2O. The catalysed reaction is D-ribulose 1,5-bisphosphate + O2 = 2-phosphoglycolate + (2R)-3-phosphoglycerate + 2 H(+). Its function is as follows. RuBisCO catalyzes two reactions: the carboxylation of D-ribulose 1,5-bisphosphate, the primary event in carbon dioxide fixation, as well as the oxidative fragmentation of the pentose substrate in the photorespiration process. Both reactions occur simultaneously and in competition at the same active site. In Populus trichocarpa (Western balsam poplar), this protein is Ribulose bisphosphate carboxylase large chain.